A 338-amino-acid chain; its full sequence is 6-phosphogluconolactonase (338 aa).

Belongs to the cycloisomerase 2 family.

The catalysed reaction is 6-phospho-D-glucono-1,5-lactone + H2O = 6-phospho-D-gluconate + H(+). The protein operates within carbohydrate degradation; pentose phosphate pathway; D-ribulose 5-phosphate from D-glucose 6-phosphate (oxidative stage): step 2/3. Functionally, catalyzes the hydrolysis of 6-phosphogluconolactone to 6-phosphogluconate. The sequence is that of 6-phosphogluconolactonase from Blochmanniella floridana.